A 183-amino-acid chain; its full sequence is Gamma-crystallin N-B (183 aa).

4 Beta/gamma crystallin 'Greek key' domains span residues 6–46 (GKIC…RVES), 47–89 (GAWI…RPIR), 95–136 (YRME…RVFG), and 138–180 (GAWV…RRIV).

The protein belongs to the beta/gamma-crystallin family. In terms of assembly, monomer.

In terms of biological role, crystallins are the dominant structural components of the vertebrate eye lens. The protein is Gamma-crystallin N-B (crygnb) of Danio rerio (Zebrafish).